Here is a 92-residue protein sequence, read N- to C-terminus: UPF0298 protein ABC2380 (92 aa).

It belongs to the UPF0298 family.

It localises to the cytoplasm. This chain is UPF0298 protein ABC2380, found in Shouchella clausii (strain KSM-K16) (Alkalihalobacillus clausii).